We begin with the raw amino-acid sequence, 256 residues long: Pimeloyl-[acyl-carrier protein] methyl ester esterase (256 aa).

Residues 17-241 (VYLIHGWGAN…KAAHAPFLSH (225 aa)) enclose the AB hydrolase-1 domain. Substrate is bound by residues tryptophan 23, 83–84 (SL), and 145–149 (FLQLQ). Serine 83 (nucleophile) is an active-site residue. Catalysis depends on residues aspartate 207 and histidine 235. Histidine 235 is a substrate binding site.

It belongs to the AB hydrolase superfamily. Carboxylesterase BioH family. As to quaternary structure, monomer.

It localises to the cytoplasm. It catalyses the reaction 6-carboxyhexanoyl-[ACP] methyl ester + H2O = 6-carboxyhexanoyl-[ACP] + methanol + H(+). The protein operates within cofactor biosynthesis; biotin biosynthesis. The physiological role of BioH is to remove the methyl group introduced by BioC when the pimeloyl moiety is complete. It allows to synthesize pimeloyl-ACP via the fatty acid synthetic pathway through the hydrolysis of the ester bonds of pimeloyl-ACP esters. This Neisseria meningitidis serogroup C / serotype 2a (strain ATCC 700532 / DSM 15464 / FAM18) protein is Pimeloyl-[acyl-carrier protein] methyl ester esterase.